A 225-amino-acid chain; its full sequence is Proteasome activator 28 (225 aa).

This sequence belongs to the PA28 family. As to quaternary structure, homoheptamer. The homoheptamer associates with the 20S proteasome.

The protein localises to the nucleus. Its function is as follows. Subunit of the 11S REG (also called PA28) proteasome regulator, a doughnut-shaped homoheptamer which associates with the proteasome. 11S REG-gamma activates preferentially the trypsin-like catalytic subunit of the proteasome. May also be involved in cell cycle regulation. The protein is Proteasome activator 28 (psmE3) of Dictyostelium discoideum (Social amoeba).